A 266-amino-acid chain; its full sequence is Gasdermin bGSDM (266 aa).

A run of 4 beta stranded transmembrane segments spans residues 65 to 81 (FSGQ…GADL), 93 to 113 (EDKL…FAYE), 162 to 181 (QFTV…EAAV), and 187 to 203 (AHAS…SLQT). Positions 248–266 (GEEDFSVQPLQAPSGLLKL) are C-terminal region.

The protein belongs to the bacterial gasdermin family. In terms of assembly, monomer. Forms large, homooligomeric ring-shaped pores when inserted in membranes.

It is found in the cytoplasm. Its subcellular location is the cell membrane. Its activity is regulated as follows. The full-length protein before cleavage is inactive: intramolecular interactions between the N-terminal domain and the C-terminal region mediate autoinhibition. The pyroptosis-like-inducing activity is carried by the released N-terminal domain (Gasdermin bGSDM, N-terminus). Precursor of a pore-forming protein involved in defense against bacteriophages. Cleavage of this precursor by its dedicated protease releases the active moiety (gasdermin bGSDM, N-terminus) which inserts into membranes, forming pores and triggering cell death. Expression of bGSDM and the neighboring protease gene (Ga0307981_100051430) is highly toxic in E.coli. Functionally, pore-forming protein that causes membrane permeabilization via a pyroptosis-like activity. This is the active form which makes ring-like pores with an interior pore diameter of 130-190 Angstroms, when integrated in liposomes. The sequence is that of Gasdermin bGSDM from Unknown prokaryotic organism.